We begin with the raw amino-acid sequence, 251 residues long: Aliphatic sulfonates import ATP-binding protein SsuB (251 aa).

Residues 3 to 231 form the ABC transporter domain; sequence VSINEVSKYF…PRNKTSQSFQ (229 aa). 39–46 contributes to the ATP binding site; sequence GPSGCGKS.

Belongs to the ABC transporter superfamily. Aliphatic sulfonates importer (TC 3.A.1.17.2) family. As to quaternary structure, the complex is composed of two ATP-binding proteins (SsuB), two transmembrane proteins (SsuC) and a solute-binding protein (SsuA).

The protein localises to the cell membrane. It catalyses the reaction ATP + H2O + aliphatic sulfonate-[sulfonate-binding protein]Side 1 = ADP + phosphate + aliphatic sulfonateSide 2 + [sulfonate-binding protein]Side 1.. Part of the ABC transporter complex SsuABC involved in aliphatic sulfonates import. Responsible for energy coupling to the transport system. In Bacillus thuringiensis subsp. konkukian (strain 97-27), this protein is Aliphatic sulfonates import ATP-binding protein SsuB.